The sequence spans 432 residues: Trigger factor (432 aa).

Residues 161–246 (EDRVTIDFTG…LKKVEERELP (86 aa)) form the PPIase FKBP-type domain.

It belongs to the FKBP-type PPIase family. Tig subfamily.

The protein resides in the cytoplasm. The catalysed reaction is [protein]-peptidylproline (omega=180) = [protein]-peptidylproline (omega=0). Its function is as follows. Involved in protein export. Acts as a chaperone by maintaining the newly synthesized protein in an open conformation. Functions as a peptidyl-prolyl cis-trans isomerase. This chain is Trigger factor, found in Cronobacter sakazakii (strain ATCC BAA-894) (Enterobacter sakazakii).